A 497-amino-acid polypeptide reads, in one-letter code: MVSEFPGPGSRVPWRPRDEALRVNVGGVRRLLSARALARFPGTRLGRLQAAVSEEQARRLCDDYDAAAREFYFDRHPGFFLGLLHFYRTGHLHVLDELCVFAFGQEADYWGLGENALATCCRARYLERRVTRPRAWDEDSDAPSSVDPCPDEISDVQRELARYGAARCGRLRRRLWLTMENPGYSLPSKLFSCVSIGVVLASIAAMCIHSLPEYQAREAAAAVAAVAAGRSAEDVRDDPVLRRLEYFCIAWFSFEVSSRLLLAPSTRNFFCHPLNLIDIVSVLPFYLTLLAGAALGDRRGASGEELGDLGKVVQVFRLMRIFRVLKLARHSTGLRSLGATLKHSYREVGILLLYLAVGVSVFSGVAYTAEEKNVGFDTIPACWWWGTVSMTTVGYGDVVPETVAGKLAASGCILGGILVVALPITIIFNKFSHFYRRQKALEAAVRSSGQREFEDLLSSVDGVSDVSLETSRETSQEGRSTDLETQAPSEPAKSHSY.

Residues 1–186 (MVSEFPGPGS…LTMENPGYSL (186 aa)) are Cytoplasmic-facing. The helical transmembrane segment at 187 to 208 (PSKLFSCVSIGVVLASIAAMCI) threads the bilayer. At 209–239 (HSLPEYQAREAAAAVAAVAAGRSAEDVRDDP) the chain is on the extracellular side. A helical transmembrane segment spans residues 240–262 (VLRRLEYFCIAWFSFEVSSRLLL). Residues 263 to 273 (APSTRNFFCHP) are Cytoplasmic-facing. A helical membrane pass occupies residues 274-291 (LNLIDIVSVLPFYLTLLA). At 292-309 (GAALGDRRGASGEELGDL) the chain is on the extracellular side. A helical; Voltage-sensor membrane pass occupies residues 310–330 (GKVVQVFRLMRIFRVLKLARH). Residues 331–345 (STGLRSLGATLKHSY) lie on the Cytoplasmic side of the membrane. Residues 346–367 (REVGILLLYLAVGVSVFSGVAY) form a helical membrane-spanning segment. Residues 368 to 379 (TAEEKNVGFDTI) lie on the Extracellular side of the membrane. Residues 380–391 (PACWWWGTVSMT) constitute an intramembrane region (helical). The Selectivity filter signature appears at 392-397 (TVGYGD). The stretch at 392 to 399 (TVGYGDVV) is an intramembrane region. At 400 to 406 (PETVAGK) the chain is on the extracellular side. A helical transmembrane segment spans residues 407–435 (LAASGCILGGILVVALPITIIFNKFSHFY). Residues 436–497 (RRQKALEAAV…PSEPAKSHSY (62 aa)) are Cytoplasmic-facing. The tract at residues 464–497 (SDVSLETSRETSQEGRSTDLETQAPSEPAKSHSY) is disordered. A compositionally biased stretch (basic and acidic residues) spans 470 to 482 (TSRETSQEGRSTD).

It belongs to the potassium channel family. S (TC 1.A.1.2) subfamily. Kv9.1/KCNS1 sub-subfamily. In terms of assembly, heterotetramer with KCNB1. Heterotetramer with KCNB2. Does not form homomultimers. Highly expressed in brain, but not in the other tissues tested.

The protein resides in the cell membrane. In terms of biological role, potassium channel regulatory subunit that modulate the delayed rectifier voltage-gated potassium channel activity of KCNB1 and KCNB2 by altering their kinetics, expression levels, and shifting the half-inactivation potential to more polarized values. While it does not form functional channels on its own, it can form functional heterotetrameric channels with KCNB1 and KCNB2. Each regulatory subunit has unique regulatory properties that can lead to extensive inhibition, significant changes in kinetics, and/or substantial shifts in the voltage dependencies of the inactivation process. This Rattus norvegicus (Rat) protein is Delayed-rectifier potassium channel regulatory subunit KCNS1.